The following is a 46-amino-acid chain: Delta-actitoxin-Avd1d (46 aa).

Disulfide bonds link Cys4–Cys44, Cys6–Cys34, and Cys27–Cys45.

It belongs to the sea anemone sodium channel inhibitory toxin family. Type I subfamily.

Its subcellular location is the secreted. It is found in the nematocyst. Binds specifically to voltage-gated sodium channels (Nav), thereby delaying their inactivation during signal transduction. Thus it strongly stimulates mammalian cardiac muscle contraction. The polypeptide is Delta-actitoxin-Avd1d (Anemonia sulcata (Mediterranean snakelocks sea anemone)).